The sequence spans 114 residues: UPF0102 protein HP_0823 (114 aa).

The protein belongs to the UPF0102 family.

This is UPF0102 protein HP_0823 from Helicobacter pylori (strain ATCC 700392 / 26695) (Campylobacter pylori).